The chain runs to 231 residues: 7-cyano-7-deazaguanine synthase (231 aa).

8–18 is an ATP binding site; that stretch reads FSGGQDSTTCL. Zn(2+)-binding residues include C188, C197, C200, and C203.

Belongs to the QueC family. The cofactor is Zn(2+).

It catalyses the reaction 7-carboxy-7-deazaguanine + NH4(+) + ATP = 7-cyano-7-deazaguanine + ADP + phosphate + H2O + H(+). The protein operates within purine metabolism; 7-cyano-7-deazaguanine biosynthesis. Its function is as follows. Catalyzes the ATP-dependent conversion of 7-carboxy-7-deazaguanine (CDG) to 7-cyano-7-deazaguanine (preQ(0)). This chain is 7-cyano-7-deazaguanine synthase, found in Salmonella paratyphi B (strain ATCC BAA-1250 / SPB7).